Reading from the N-terminus, the 84-residue chain is Acyl carrier protein (84 aa).

One can recognise a Carrier domain in the interval 1 to 75 (MIFQKIQEFI…DILEYIQQHV (75 aa)). O-(pantetheine 4'-phosphoryl)serine is present on serine 35.

It belongs to the acyl carrier protein (ACP) family. In terms of processing, 4'-phosphopantetheine is transferred from CoA to a specific serine of apo-ACP by AcpS. This modification is essential for activity because fatty acids are bound in thioester linkage to the sulfhydryl of the prosthetic group.

It is found in the cytoplasm. Its pathway is lipid metabolism; fatty acid biosynthesis. Functionally, carrier of the growing fatty acid chain in fatty acid biosynthesis. This Phytoplasma mali (strain AT) protein is Acyl carrier protein.